The primary structure comprises 66 residues: UPF0337 protein M6_Spy1542 (66 aa).

The span at 1 to 10 shows a compositional bias: basic and acidic residues; sequence MSEEKLKAKV. The tract at residues 1-22 is disordered; that stretch reads MSEEKLKAKVEQASGSLKEGAG.

It belongs to the UPF0337 (CsbD) family.

The sequence is that of UPF0337 protein M6_Spy1542 from Streptococcus pyogenes serotype M6 (strain ATCC BAA-946 / MGAS10394).